A 591-amino-acid polypeptide reads, in one-letter code: Pentatricopeptide repeat-containing protein At3g47530 (591 aa).

PPR repeat units lie at residues 76–110, 112–146, 147–177, 178–208, 216–250, 251–281, 282–316, 317–351, and 354–384; these read TLSHCNTMIRAFSLSQTPCEGFRLFRSLRRNSSLP, NPLSSSFALKCCIKSGDLLGGLQIHGKIFSDGFLS, DSLLMTTLMDLYSTCENSTDACKVFDEIPKR, DTVSWNVLFSCYLRNKRTRDVLVLFDKMKND, DGVTCLLALQACANLGALDFGKQVHDFIDENGLSG, ALNLSNTLVSMYSRCGSMDKAYQVFYGMRER, NVVSWTALISGLAMNGFGKEAIEAFNEMLKFGISP, EEQTLTGLLSACSHSGLVAEGMMFFDRMRSGEFKI, and NLHHYGCVVDLLGRARLLDKAYSLIKSMEMK. A type E motif region spans residues 389 to 464; the sequence is IWRTLLGACR…KPGCSAIELQ (76 aa). The interval 465–495 is type E(+) motif; the sequence is GTVHEFIVDDVSHPRKEEIYKMLAEINQQLK. The tract at residues 496–591 is type DYW motif; it reads IAGYVAEITS…GGSCSCNDFW (96 aa).

This sequence belongs to the PPR family. PCMP-H subfamily.

In Arabidopsis thaliana (Mouse-ear cress), this protein is Pentatricopeptide repeat-containing protein At3g47530 (PCMP-H76).